The sequence spans 649 residues: ENTH domain-containing protein C19F8.03c (649 aa).

One can recognise an ENTH domain in the interval 2 to 136 (SPSKWLLTYE…VDYAQVGDAP (135 aa)). 3 disordered regions span residues 280–382 (YLQN…NELE), 409–440 (LSAEGTSASPSLDKKSESTNIVQPIPSHPNDS), and 590–649 (FTHG…PFRS). Phosphoserine occurs at positions 285 and 287. The segment covering 299–308 (PTLRKKKSIP) has biased composition (basic residues). Polar residues-rich tracts occupy residues 313 to 326 (ESSSTIQKENTVQQ) and 340 to 349 (PETQRTTSRI). Over residues 352-381 (QEEEIKEEEMEGEEEEEEEEVPNYESENEL) the composition is skewed to acidic residues. 3 stretches are compositionally biased toward polar residues: residues 409–418 (LSAEGTSASP), 614–624 (TPYTASKNPFS), and 635–649 (ARNSISTESKNPFRS). At T414 the chain carries Phosphothreonine. S417 is subject to Phosphoserine.

The protein resides in the cytoplasm. The chain is ENTH domain-containing protein C19F8.03c from Schizosaccharomyces pombe (strain 972 / ATCC 24843) (Fission yeast).